A 159-amino-acid polypeptide reads, in one-letter code: MKIVQETISTKTKKNIAIIISRYNNFINQHLLDGALDILKRIGQINQKNIPIIHVPGAYEIPIIASIISKQKKYNAIIALGTIIKGHTLHYSHISHAVNSGLTNISITNNIPISIGIITANNIEQAIERAGTKLGNKGSEAALTALEMINIINILAQNK.

5-amino-6-(D-ribitylamino)uracil is bound by residues Tyr23, 58 to 60, and 82 to 84; these read AYE and TII. The active-site Proton donor is His90. Ile115 is a binding site for 5-amino-6-(D-ribitylamino)uracil. Residue Arg129 coordinates (2S)-2-hydroxy-3-oxobutyl phosphate.

This sequence belongs to the DMRL synthase family. As to quaternary structure, forms an icosahedral capsid composed of 60 subunits, arranged as a dodecamer of pentamers.

It catalyses the reaction (2S)-2-hydroxy-3-oxobutyl phosphate + 5-amino-6-(D-ribitylamino)uracil = 6,7-dimethyl-8-(1-D-ribityl)lumazine + phosphate + 2 H2O + H(+). Its pathway is cofactor biosynthesis; riboflavin biosynthesis; riboflavin from 2-hydroxy-3-oxobutyl phosphate and 5-amino-6-(D-ribitylamino)uracil: step 1/2. In terms of biological role, catalyzes the formation of 6,7-dimethyl-8-ribityllumazine by condensation of 5-amino-6-(D-ribitylamino)uracil with 3,4-dihydroxy-2-butanone 4-phosphate. This is the penultimate step in the biosynthesis of riboflavin. The sequence is that of 6,7-dimethyl-8-ribityllumazine synthase from Buchnera aphidicola subsp. Baizongia pistaciae (strain Bp).